The primary structure comprises 284 residues: Tropomyosin alpha-3 chain (284 aa).

Methionine 1 is modified (N-acetylmethionine). The tract at residues 1–43 (MEAIKKKMQMLKLDKENALDRAEQAEAEQKQAEERSKQLEDEL) is disordered. Positions 1–284 (MEAIKKKMQM…DHALNDMTSI (284 aa)) form a coiled coil. Glutamate 2 is subject to N-acetylalanine. Over residues 12–40 (KLDKENALDRAEQAEAEQKQAEERSKQLE) the composition is skewed to basic and acidic residues. A Phosphothreonine modification is found at threonine 53. Serine 61 and serine 87 each carry phosphoserine. Residue threonine 108 is modified to Phosphothreonine. 2 positions are modified to phosphoserine: serine 206 and serine 215. At leucine 228 the chain carries N6-acetyllysine. Threonine 252 carries the post-translational modification Phosphothreonine. Tyrosine 261 bears the Phosphotyrosine mark. Position 271 is a phosphoserine (serine 271). Position 282 is a phosphothreonine (threonine 282). Serine 283 bears the Phosphoserine mark.

It belongs to the tropomyosin family. As to quaternary structure, homodimer. Heterodimer of an alpha (TPM1, TPM3 or TPM4) and a beta (TPM2) chain. Interacts with TMOD1. Interacts with TNNT1.

The protein resides in the cytoplasm. It is found in the cytoskeleton. Its function is as follows. Binds to actin filaments in muscle and non-muscle cells. Plays a central role, in association with the troponin complex, in the calcium dependent regulation of vertebrate striated muscle contraction. Smooth muscle contraction is regulated by interaction with caldesmon. In non-muscle cells is implicated in stabilizing cytoskeleton actin filaments. The sequence is that of Tropomyosin alpha-3 chain (TPM3) from Bos taurus (Bovine).